The sequence spans 227 residues: Ribonuclease HII (227 aa).

Residues 1–210 enclose the RNase H type-2 domain; sequence MKLAGIDEAG…LKKIEEKLAK (210 aa). Asp-7, Glu-8, and Asp-105 together coordinate a divalent metal cation.

The protein belongs to the RNase HII family. It depends on Mn(2+) as a cofactor. The cofactor is Mg(2+).

It localises to the cytoplasm. It carries out the reaction Endonucleolytic cleavage to 5'-phosphomonoester.. Endonuclease that specifically degrades the RNA of RNA-DNA hybrids. This chain is Ribonuclease HII, found in Thermococcus onnurineus (strain NA1).